Consider the following 707-residue polypeptide: Polyribonucleotide nucleotidyltransferase (707 aa).

Aspartate 485 and aspartate 491 together coordinate Mg(2+). In terms of domain architecture, KH spans 552–615 (PRITVINIPK…AAIKWIKGIV (64 aa)). An S1 motif domain is found at 621 to 689 (GEIYEGKVVK…DRGKVKLSMK (69 aa)).

The protein belongs to the polyribonucleotide nucleotidyltransferase family. Mg(2+) is required as a cofactor.

It localises to the cytoplasm. It catalyses the reaction RNA(n+1) + phosphate = RNA(n) + a ribonucleoside 5'-diphosphate. Its function is as follows. Involved in mRNA degradation. Catalyzes the phosphorolysis of single-stranded polyribonucleotides processively in the 3'- to 5'-direction. The polypeptide is Polyribonucleotide nucleotidyltransferase (Rhodospirillum centenum (strain ATCC 51521 / SW)).